The chain runs to 317 residues: NADH kinase (317 aa).

This sequence belongs to the NAD kinase family. Homodimer. In terms of tissue distribution, ubiquitous.

It is found in the cytoplasm. It carries out the reaction NADH + ATP = ADP + NADPH + H(+). Its activity is regulated as follows. Two-fold decrease in activity in the presence of PPi, iodoacetate or para-chloromercuribenzoate. Functionally, phosphorylates specifically NADH. Can phosphorylate NAD with a 100-fold decrease in efficiency compared to NADH. Prefers ATP as nucleoside triphosphate substrate. Can also utilize UTP, GTP and CTP. Key source of the cellular reductant NADPH which is an important antioxidant factor. The chain is NADH kinase (NADK3) from Arabidopsis thaliana (Mouse-ear cress).